The sequence spans 214 residues: MSLGLVGRKVGMTRIFAEDGRSVPVTVLDVSNNRVTQIKTPESDGYAAVQVTFGKRRASRVGKPLAGHLAKAGVEAGHMLKEFRVETEQVAGFKAGDVVGVDLFAVGQKVDVTGTSIGKGFSGVGKRHNFSSNRASHGNSVSHNAPGSIGMAQDPGRVFPGKRMAGQYGNTTCTTQGLEVVRVDVERQLLLVKGAVPGSKGGDVIVRPAVKARG.

At Gln-153 the chain carries N5-methylglutamine.

It belongs to the universal ribosomal protein uL3 family. In terms of assembly, part of the 50S ribosomal subunit. Forms a cluster with proteins L14 and L19. Post-translationally, methylated by PrmB.

One of the primary rRNA binding proteins, it binds directly near the 3'-end of the 23S rRNA, where it nucleates assembly of the 50S subunit. In Aromatoleum aromaticum (strain DSM 19018 / LMG 30748 / EbN1) (Azoarcus sp. (strain EbN1)), this protein is Large ribosomal subunit protein uL3.